We begin with the raw amino-acid sequence, 140 residues long: Small ribosomal subunit protein uS19 (140 aa).

Positions 43 to 71 (IERGLTTEQQKLRETVRDADPQKTANDPI) are disordered. Over residues 52–63 (QKLRETVRDADP) the composition is skewed to basic and acidic residues.

Belongs to the universal ribosomal protein uS19 family.

Functionally, protein S19 forms a complex with S13 that binds strongly to the 16S ribosomal RNA. The sequence is that of Small ribosomal subunit protein uS19 from Haloquadratum walsbyi (strain DSM 16790 / HBSQ001).